A 732-amino-acid polypeptide reads, in one-letter code: Acylamino-acid-releasing enzyme (732 aa).

M1 is subject to N-acetylmethionine. Phosphoserine is present on residues S185 and S187. Residues S587, D675, and H707 each act as charge relay system in the active site.

This sequence belongs to the peptidase S9C family. As to quaternary structure, homotetramer.

It localises to the cytoplasm. It carries out the reaction Cleavage of an N-acetyl or N-formyl amino acid from the N-terminus of a polypeptide.. With respect to regulation, homotetramerization is required for activity. Tetramerization results in the formation of a gated channel which is involved in substrate selection and substrate access to the catalytic sites. In terms of biological role, this enzyme catalyzes the hydrolysis of the N-terminal peptide bond of an N-acetylated peptide to generate an N-acetylated amino acid and a peptide with a free N-terminus. It preferentially cleaves off Ac-Ala, Ac-Met and Ac-Ser. Also, involved in the degradation of oxidized and glycated proteins. This chain is Acylamino-acid-releasing enzyme (Apeh), found in Mus musculus (Mouse).